The sequence spans 219 residues: 3-dehydroquinate dehydratase (219 aa).

3-dehydroquinate-binding positions include 34-36 (ELR) and R63. H114 functions as the Proton donor/acceptor in the catalytic mechanism. K139 (schiff-base intermediate with substrate) is an active-site residue. 3-dehydroquinate contacts are provided by R174, T193, and Q197.

The protein belongs to the type-I 3-dehydroquinase family. In terms of assembly, homodimer.

The catalysed reaction is 3-dehydroquinate = 3-dehydroshikimate + H2O. It participates in metabolic intermediate biosynthesis; chorismate biosynthesis; chorismate from D-erythrose 4-phosphate and phosphoenolpyruvate: step 3/7. In terms of biological role, involved in the third step of the chorismate pathway, which leads to the biosynthesis of aromatic amino acids. Catalyzes the cis-dehydration of 3-dehydroquinate (DHQ) and introduces the first double bond of the aromatic ring to yield 3-dehydroshikimate. The polypeptide is 3-dehydroquinate dehydratase (Sulfolobus acidocaldarius (strain ATCC 33909 / DSM 639 / JCM 8929 / NBRC 15157 / NCIMB 11770)).